We begin with the raw amino-acid sequence, 307 residues long: NAD kinase (307 aa).

Asp80 serves as the catalytic Proton acceptor. NAD(+) contacts are provided by residues Asp80–Gly81, His85, Asn154–Asp155, His165, His182, Asp184, Thr195–Ser200, and Gln254.

Belongs to the NAD kinase family. A divalent metal cation is required as a cofactor.

The protein resides in the cytoplasm. It catalyses the reaction NAD(+) + ATP = ADP + NADP(+) + H(+). Involved in the regulation of the intracellular balance of NAD and NADP, and is a key enzyme in the biosynthesis of NADP. Catalyzes specifically the phosphorylation on 2'-hydroxyl of the adenosine moiety of NAD to yield NADP. This chain is NAD kinase, found in Acinetobacter baylyi (strain ATCC 33305 / BD413 / ADP1).